The sequence spans 41 residues: Large ribosomal subunit protein bL36 (41 aa).

A disordered region spans residues Met1–Arg21.

This sequence belongs to the bacterial ribosomal protein bL36 family.

The chain is Large ribosomal subunit protein bL36 from Methylobacterium sp. (strain 4-46).